A 1257-amino-acid polypeptide reads, in one-letter code: Elongation factor 2 (1257 aa).

The 130-residue stretch at 273-402 (LAGLMFGDGC…LQLLLQKFDV (130 aa)) folds into the DOD-type homing endonuclease domain. The region spanning 541–782 (VEEHHNFAAE…MVVKHLPDPV (242 aa)) is the tr-type G domain. GTP contacts are provided by residues 616–620 (DTPGH) and 670–673 (NKVD). Residue H1120 is modified to Diphthamide. Residues 1237–1250 (ERKGLKPEPPKPED) are compositionally biased toward basic and acidic residues. A disordered region spans residues 1237-1257 (ERKGLKPEPPKPEDYIEDYGG).

This sequence belongs to the TRAFAC class translation factor GTPase superfamily. Classic translation factor GTPase family. EF-G/EF-2 subfamily. This protein undergoes a protein self splicing that involves a post-translational excision of the intervening region (intein) followed by peptide ligation.

It is found in the cytoplasm. Its function is as follows. Catalyzes the GTP-dependent ribosomal translocation step during translation elongation. During this step, the ribosome changes from the pre-translocational (PRE) to the post-translocational (POST) state as the newly formed A-site-bound peptidyl-tRNA and P-site-bound deacylated tRNA move to the P and E sites, respectively. Catalyzes the coordinated movement of the two tRNA molecules, the mRNA and conformational changes in the ribosome. The polypeptide is Elongation factor 2 (Methanopyrus kandleri (strain AV19 / DSM 6324 / JCM 9639 / NBRC 100938)).